Here is an 842-residue protein sequence, read N- to C-terminus: Oligopeptide transporter phomP2' (842 aa).

A disordered region spans residues 1–58 (MEADPKVPFTDEMNIQDEHNWESGSWSSSRRSNDSNVTLLSRRSSVEQHEDERQKDSD). The segment covering 23-36 (SGSWSSSRRSNDSN) has biased composition (low complexity). Residues N33 and N36 are each glycosylated (N-linked (GlcNAc...) asparagine). Over residues 44–58 (SSVEQHEDERQKDSD) the composition is skewed to basic and acidic residues. 6 helical membrane-spanning segments follow: residues 105–125 (VWLL…VYYF), 177–197 (ALVV…GPLS), 210–230 (PWAI…VGLY), 268–288 (VFMA…FVFP), 315–335 (GFGL…SPLF), and 345–365 (FVGA…SDAL). N-linked (GlcNAc...) asparagine glycans are attached at residues N386 and N398. 4 helical membrane passes run 415–435 (AMHF…AVLF), 478–498 (AWYA…LYAG), 505–525 (WGLQ…GMLF), and 585–605 (WELL…NWAV). A compositionally biased stretch (gly residues) spans 629 to 649 (QGLGLGQGGGGGGGGGGGGGQ). Residues 629-657 (QGLGLGQGGGGGGGGGGGGGQQQRAAGAH) are disordered. The next 3 helical transmembrane spans lie at 668-688 (NFFS…FGGG), 700-720 (WLLP…WLIH), and 731-751 (WPLH…FPTT). N752 is a glycosylation site (N-linked (GlcNAc...) asparagine). A helical transmembrane segment spans residues 784–804 (AGLDCGAQLVQMVLGLAFLVF).

This sequence belongs to the oligopeptide OPT transporter family.

It localises to the membrane. Functionally, oligopeptide transporter; part of the gene cluster that mediates the biosynthesis of the phomopsins, a group of hexapeptide mycotoxins which infects lupins and causes lupinosis disease in livestock. This Diaporthe leptostromiformis (Lupinosis disease fungus) protein is Oligopeptide transporter phomP2'.